The primary structure comprises 322 residues: Lipoyl synthase (322 aa).

[4Fe-4S] cluster contacts are provided by Cys-68, Cys-73, Cys-79, Cys-94, Cys-98, Cys-101, and Ser-309. The Radical SAM core domain maps to 80–298; the sequence is FNHGTASFMI…RVAGVEMGFS (219 aa).

This sequence belongs to the radical SAM superfamily. Lipoyl synthase family. [4Fe-4S] cluster serves as cofactor.

It localises to the cytoplasm. It carries out the reaction [[Fe-S] cluster scaffold protein carrying a second [4Fe-4S](2+) cluster] + N(6)-octanoyl-L-lysyl-[protein] + 2 oxidized [2Fe-2S]-[ferredoxin] + 2 S-adenosyl-L-methionine + 4 H(+) = [[Fe-S] cluster scaffold protein] + N(6)-[(R)-dihydrolipoyl]-L-lysyl-[protein] + 4 Fe(3+) + 2 hydrogen sulfide + 2 5'-deoxyadenosine + 2 L-methionine + 2 reduced [2Fe-2S]-[ferredoxin]. It functions in the pathway protein modification; protein lipoylation via endogenous pathway; protein N(6)-(lipoyl)lysine from octanoyl-[acyl-carrier-protein]: step 2/2. In terms of biological role, catalyzes the radical-mediated insertion of two sulfur atoms into the C-6 and C-8 positions of the octanoyl moiety bound to the lipoyl domains of lipoate-dependent enzymes, thereby converting the octanoylated domains into lipoylated derivatives. The sequence is that of Lipoyl synthase from Idiomarina loihiensis (strain ATCC BAA-735 / DSM 15497 / L2-TR).